The following is a 320-amino-acid chain: MIYNNISLNTITTTPLTYRDRITFEFSVHGTCVVFNLFLCIFFICRPHLLRTFKPTIFFVTLGTFVLSLPLFFLQFYLVVFLWSLVEPRYTIAVCTLVKCITSSTTSCAQVLPLAVAIYRYFIVVRNKKMPSWFVVVVHSIISFIFFVIAILNFPLGEFETNDQCAVLRFSKAMEAVRISLTLGLNLFAVFINVAIYTFVKKYDKRNVDVHRRRVQLTYSMLLQSMIPILVSIPLLVGSFDFYFGYTLPSGFTSRWYATTFLSPLLTPISSMLSLRTIRHELLSIILSSFLFTGTRKISNLVTKTSKTNVAPHSSDYSSA.

The next 7 helical transmembrane spans lie at 24–44, 65–85, 105–125, 132–152, 179–199, 226–246, and 253–275; these read FEFS…IFFI, FVLS…LWSL, TTSC…FIVV, SWFV…IAIL, ISLT…IYTF, MIPI…YFGY, and TSRW…MLSL.

The protein localises to the membrane. This is an uncharacterized protein from Caenorhabditis elegans.